The chain runs to 266 residues: Protein-ADP-ribose hydrolase (266 aa).

A Macro domain is found at 74-265 (TDLKDLKPIK…LYKEAFNRDA (192 aa)). The ADP-D-ribose site is built by D93, I94, and N107. Zn(2+) is bound by residues C113, H118, and C120. ADP-D-ribose-binding residues include C120, I121, D122, S212, T213, G214, and F216.

Belongs to the MacroD-type family. Zn-Macro subfamily. The cofactor is Zn(2+).

The catalysed reaction is 4-O-(ADP-D-ribosyl)-L-aspartyl-[protein] + H2O = L-aspartyl-[protein] + ADP-D-ribose + H(+). Functionally, ADP-ribosylhydrolase that specifically reverses the SirTM-mediated mono-ADP-ribosylation at an asparatate residue of GcvH-L, by releasing ADP-ribose from the target protein. May play a role in the regulation of the response to host-induced oxidative stress. The protein is Protein-ADP-ribose hydrolase of Staphylococcus aureus (strain MRSA252).